Here is a 173-residue protein sequence, read N- to C-terminus: Oleosin 18.5 kDa (173 aa).

The interval 1-45 is polar; that stretch reads MADTARGTHHDIIGRDQYPMMGRDRDQYQMSGRGSDYSKSRQIAK. Residues 46 to 117 form a hydrophobic region; it reads AATAVTAGGS…AAITVFSWIY (72 aa). 3 consecutive transmembrane segments (helical) span residues 54–74, 76–96, and 97–117; these read GSLL…LTVA, PLLV…ALLI, and TGFL…SWIY. The segment at 151 to 173 is disordered; that stretch reads YYGQQHTGGEHDRDRTRGGQHTT. The segment covering 158–167 has biased composition (basic and acidic residues); sequence GGEHDRDRTR.

Belongs to the oleosin family.

It is found in the lipid droplet. The protein localises to the membrane. In terms of biological role, may have a structural role to stabilize the lipid body during desiccation of the seed by preventing coalescence of the oil. Probably interacts with both lipid and phospholipid moieties of lipid bodies. May also provide recognition signals for specific lipase anchorage in lipolysis during seedling growth. In Arabidopsis thaliana (Mouse-ear cress), this protein is Oleosin 18.5 kDa.